A 158-amino-acid polypeptide reads, in one-letter code: Transcription elongation factor GreA (158 aa).

The protein belongs to the GreA/GreB family.

Its function is as follows. Necessary for efficient RNA polymerase transcription elongation past template-encoded arresting sites. The arresting sites in DNA have the property of trapping a certain fraction of elongating RNA polymerases that pass through, resulting in locked ternary complexes. Cleavage of the nascent transcript by cleavage factors such as GreA or GreB allows the resumption of elongation from the new 3'terminus. GreA releases sequences of 2 to 3 nucleotides. The chain is Transcription elongation factor GreA from Zymomonas mobilis subsp. mobilis (strain ATCC 31821 / ZM4 / CP4).